The following is a 513-amino-acid chain: 2,3-bisphosphoglycerate-independent phosphoglycerate mutase (513 aa).

2 residues coordinate Mn(2+): aspartate 12 and serine 62. Serine 62 functions as the Phosphoserine intermediate in the catalytic mechanism. Substrate contacts are provided by residues histidine 123, arginine 153 to aspartate 154, arginine 185, arginine 191, arginine 261 to arginine 264, and lysine 335. The Mn(2+) site is built by aspartate 402, histidine 406, aspartate 443, histidine 444, and histidine 462.

Belongs to the BPG-independent phosphoglycerate mutase family. As to quaternary structure, monomer. It depends on Mn(2+) as a cofactor.

The catalysed reaction is (2R)-2-phosphoglycerate = (2R)-3-phosphoglycerate. Its pathway is carbohydrate degradation; glycolysis; pyruvate from D-glyceraldehyde 3-phosphate: step 3/5. In terms of biological role, catalyzes the interconversion of 2-phosphoglycerate and 3-phosphoglycerate. The sequence is that of 2,3-bisphosphoglycerate-independent phosphoglycerate mutase from Thiobacillus denitrificans (strain ATCC 25259 / T1).